A 326-amino-acid chain; its full sequence is F-box/LRR-repeat protein 12 (326 aa).

The region spanning 1–47 (MATLVELPDSVLLEIFSYLPVRDRIRISRVCHRWKRLVDDRWLWRHV) is the F-box domain. LRR repeat units follow at residues 51-78 (LYTM…RMGG), 86-111 (APQL…CLHV), 113-133 (DLSM…ELHS), 161-185 (VPAF…VLGG), 186-211 (TYRV…EVLG), 212-236 (CTLS…IRLT), 237-261 (VRGL…CLQG), and 266-291 (PEMP…ELQG).

Interacts with SKP1 and CUL1.

Its pathway is protein modification; protein ubiquitination. In terms of biological role, substrate-recognition component of the SCF (SKP1-CUL1-F-box protein)-type E3 ubiquitin ligase complex. Mediates the polyubiquitination and proteasomal degradation of CAMK1 leading to disruption of cyclin D1/CDK4 complex assembly which results in G1 cell cycle arrest in lung epithelia. The sequence is that of F-box/LRR-repeat protein 12 (FBXL12) from Homo sapiens (Human).